Here is a 66-residue protein sequence, read N- to C-terminus: Large ribosomal subunit protein bL31 (66 aa).

Zn(2+) is bound by residues cysteine 16, cysteine 18, cysteine 36, and cysteine 39.

It belongs to the bacterial ribosomal protein bL31 family. Type A subfamily. In terms of assembly, part of the 50S ribosomal subunit. The cofactor is Zn(2+).

Its function is as follows. Binds the 23S rRNA. The sequence is that of Large ribosomal subunit protein bL31 from Natranaerobius thermophilus (strain ATCC BAA-1301 / DSM 18059 / JW/NM-WN-LF).